A 469-amino-acid polypeptide reads, in one-letter code: MSQDTLFDKVWELHKVANLPGGSDQIFIGLHLIHEVTSPQAFGALKDKNLKVKFPNRTVATVDHIVPTDNQNRPFRDNLAEQMIDTLEKNCFEHKIKFFNIGSGKQGIVHVVAPELGLTQPGMTIACGDSHTSTHGAFGSIAFGIGTSQVRDVLASQTIAMNKLKVRQIWCENKLSNGIYAKDLVLHIINHLGVKAGVGYAYEFAGPAISALSMEERMTICNMSIEGGARCGYINPDEKTFSYIKDKLCSPQNENWDKAIKWWKSLQSNENSIFDDVIKIDASRVEPTVTWGITPGQSIGISQKIPSLGEIHPNDQFIAGEAYEYMGFKPGQPIKDTPIDVCFIGSCTNGRISDLRVAARVLGNHKIAKNIKAFVVPGSERVAKEAKEEGLDKVFIDAGFQWREPGCSMCLAMNSDKLIGNQVSASSSNRNFKGRQGSPSGRTLLMSPAMVAAAAIKGKVSDVRDFLNK.

Residues C347, C407, and C410 each contribute to the [4Fe-4S] cluster site.

It belongs to the aconitase/IPM isomerase family. LeuC type 1 subfamily. As to quaternary structure, heterodimer of LeuC and LeuD. Requires [4Fe-4S] cluster as cofactor.

It carries out the reaction (2R,3S)-3-isopropylmalate = (2S)-2-isopropylmalate. The protein operates within amino-acid biosynthesis; L-leucine biosynthesis; L-leucine from 3-methyl-2-oxobutanoate: step 2/4. Catalyzes the isomerization between 2-isopropylmalate and 3-isopropylmalate, via the formation of 2-isopropylmaleate. This Prochlorococcus marinus (strain MIT 9515) protein is 3-isopropylmalate dehydratase large subunit.